The chain runs to 239 residues: DNA oxidative demethylase ALKBH2 (239 aa).

The PCNA-binding motif lies at 3-7 (KFLVR). Residues 11 to 32 (RDLQGGGEEPAPTGGASGDLKS) are disordered. Substrate-binding positions include 80–82 (FGK) and 100–102 (YTF). In terms of domain architecture, Fe2OG dioxygenase spans 130–235 (TFNFVLVNRY…RVNLTFRKIL (106 aa)). Residues Asn-137, Tyr-139, and His-149 each coordinate 2-oxoglutarate. Residues His-149 and Asp-151 each contribute to the Fe cation site. Asp-152 is a substrate binding site. Residues His-214, Arg-226, Thr-230, and Arg-232 each coordinate 2-oxoglutarate. His-214 contributes to the Fe cation binding site.

It belongs to the alkB family. As to quaternary structure, interacts with PCNA homotrimer; this interaction is enhanced during the S-phase of the cell cycle. Interacts with nucleolar proteins NCL, UBTF and NPM1. Interacts with XRCC5-XRCC6 heterodimer. Fe(2+) serves as cofactor. As to expression, detected in liver, testis and kidney (at protein level). Detected in heart and testis.

The protein localises to the nucleus. Its subcellular location is the nucleolus. The protein resides in the nucleoplasm. The enzyme catalyses a methylated nucleobase within DNA + 2-oxoglutarate + O2 = a nucleobase within DNA + formaldehyde + succinate + CO2. The catalysed reaction is an N(1)-methyl-2'-deoxyadenosine in double-stranded DNA + 2-oxoglutarate + O2 = a 2'-deoxyadenosine in double-stranded DNA + formaldehyde + succinate + CO2 + H(+). It catalyses the reaction an N(1)-methyl-2'-deoxyadenosine in single-stranded DNA + 2-oxoglutarate + O2 = a 2'-deoxyadenosine in single-stranded DNA + formaldehyde + succinate + CO2 + H(+). It carries out the reaction an N(3)-methyl-2'-deoxycytidine in double-stranded DNA + 2-oxoglutarate + O2 = a 2'-deoxycytidine in double-stranded DNA + formaldehyde + succinate + CO2 + H(+). The enzyme catalyses an N(3)-methyl-2'-deoxycytidine in single-stranded DNA + 2-oxoglutarate + O2 = a 2'-deoxycytidine in single-stranded DNA + formaldehyde + succinate + CO2 + H(+). The catalysed reaction is a 1,N(6)-etheno-2'-deoxyadenosine in double-stranded DNA + 2-oxoglutarate + O2 + H2O = a 2'-deoxyadenosine in double-stranded DNA + glyoxal + succinate + CO2. It catalyses the reaction a 1,N(6)-etheno-2'-deoxyadenosine in single-stranded DNA + 2-oxoglutarate + O2 + H2O = a 2'-deoxyadenosine in single-stranded DNA + glyoxal + succinate + CO2. It carries out the reaction a 3,N(4)-etheno-2'-deoxycytidine in double-stranded DNA + 2-oxoglutarate + O2 + H2O = a 2'-deoxycytidine in double-stranded DNA + glyoxal + succinate + CO2. The enzyme catalyses a 3,N(4)-etheno-2'-deoxycytidine in single-stranded DNA + 2-oxoglutarate + O2 + H2O = a 2'-deoxycytidine in single-stranded DNA + glyoxal + succinate + CO2. The catalysed reaction is a 1,N(2)-etheno-2'-deoxyguanosine in double-stranded DNA + 2-oxoglutarate + O2 + H2O = a 2'-deoxyguanosine in double-stranded DNA + glyoxal + succinate + CO2. Its activity is regulated as follows. Activated by magnesium ions. In terms of biological role, dioxygenase that repairs alkylated nucleic acid bases by direct reversal oxidative dealkylation. Can process both double-stranded (ds) and single-stranded (ss) DNA substrates, with a strong preference for dsDNA. Uses molecular oxygen, 2-oxoglutarate and iron as cofactors to oxidize the alkyl groups that are subsequently released as aldehydes, regenerating the undamaged bases. Probes the base pair stability, locates a weakened base pair and flips the damaged base to accommodate the lesion in its active site for efficient catalysis. Repairs monoalkylated bases, specifically N1-methyladenine and N3-methylcytosine, as well as higher order alkyl adducts such as bases modified with exocyclic bridged adducts known as etheno adducts including 1,N6-ethenoadenine, 3,N4-ethenocytosine and 1,N2-ethenoguanine. Acts as a gatekeeper of genomic integrity under alkylation stress. Efficiently repairs alkylated lesions in ribosomal DNA (rDNA). These lesions can cause ss- and dsDNA strand breaks that severely impair rDNA transcription. In a response mechanism to DNA damage, associates with PCNA at replication forks to repair alkylated adducts prior to replication. This is DNA oxidative demethylase ALKBH2 (Alkbh2) from Mus musculus (Mouse).